The sequence spans 379 residues: Probable tRNA sulfurtransferase (379 aa).

The 106-residue stretch at 52–157 (DEFLDKLKFI…RHHAFVFCKI (106 aa)) folds into the THUMP domain. ATP contacts are provided by residues 175-176 (LL), Arg257, Gly279, and Gln288.

Belongs to the ThiI family.

It localises to the cytoplasm. The enzyme catalyses [ThiI sulfur-carrier protein]-S-sulfanyl-L-cysteine + a uridine in tRNA + 2 reduced [2Fe-2S]-[ferredoxin] + ATP + H(+) = [ThiI sulfur-carrier protein]-L-cysteine + a 4-thiouridine in tRNA + 2 oxidized [2Fe-2S]-[ferredoxin] + AMP + diphosphate. The catalysed reaction is [ThiS sulfur-carrier protein]-C-terminal Gly-Gly-AMP + S-sulfanyl-L-cysteinyl-[cysteine desulfurase] + AH2 = [ThiS sulfur-carrier protein]-C-terminal-Gly-aminoethanethioate + L-cysteinyl-[cysteine desulfurase] + A + AMP + 2 H(+). It functions in the pathway cofactor biosynthesis; thiamine diphosphate biosynthesis. Its function is as follows. Catalyzes the ATP-dependent transfer of a sulfur to tRNA to produce 4-thiouridine in position 8 of tRNAs, which functions as a near-UV photosensor. Also catalyzes the transfer of sulfur to the sulfur carrier protein ThiS, forming ThiS-thiocarboxylate. This is a step in the synthesis of thiazole, in the thiamine biosynthesis pathway. The sulfur is donated as persulfide by IscS. In Mycoplasmopsis pulmonis (strain UAB CTIP) (Mycoplasma pulmonis), this protein is Probable tRNA sulfurtransferase.